Reading from the N-terminus, the 148-residue chain is uncharacterized protein (148 aa).

The N-acetyltransferase domain occupies 7-148; that stretch reads LEINYKTDEL…HDVLLWKPIR (142 aa).

This is an uncharacterized protein from Staphylococcus aureus (strain Mu50 / ATCC 700699).